The chain runs to 192 residues: Protein GrpE (192 aa).

The disordered stretch occupies residues 1 to 34 (MSSKEQKTPNEQVSEEMENTAEQQVEATQETGEC). The span at 20–31 (TAEQQVEATQET) shows a compositional bias: polar residues.

It belongs to the GrpE family. Homodimer.

It is found in the cytoplasm. Functionally, participates actively in the response to hyperosmotic and heat shock by preventing the aggregation of stress-denatured proteins, in association with DnaK and GrpE. It is the nucleotide exchange factor for DnaK and may function as a thermosensor. Unfolded proteins bind initially to DnaJ; upon interaction with the DnaJ-bound protein, DnaK hydrolyzes its bound ATP, resulting in the formation of a stable complex. GrpE releases ADP from DnaK; ATP binding to DnaK triggers the release of the substrate protein, thus completing the reaction cycle. Several rounds of ATP-dependent interactions between DnaJ, DnaK and GrpE are required for fully efficient folding. The sequence is that of Protein GrpE from Yersinia pseudotuberculosis serotype I (strain IP32953).